The primary structure comprises 2271 residues: Serine-rich adhesin for platelets (2271 aa).

The N-terminal stretch at 1–89 (MSKRQKAFHD…VNMLHDQQAF (89 aa)) is a signal peptide. The segment at 90 to 230 (AASDAPLTSE…KTSTTSTSTA (141 aa)) is serine-rich repeat region 1, SRR1. A compositionally biased stretch (polar residues) spans 100-111 (LNTQSETVGNQN). 3 disordered regions span residues 100-229 (LNTQ…STST), 751-791 (NSMS…VVST), and 806-2243 (SVSA…GLLG). A compositionally biased stretch (low complexity) spans 112–128 (STTIEASTSTADSTSVT). Polar residues predominate over residues 129–140 (KNSSSVQTSNSD). Low complexity predominate over residues 150-229 (VTSTTNSTSN…NKTSTTSTST (80 aa)). Residues 231–751 (PVKLRTFSRL…TTFKYEVTRN (521 aa)) form a non-repeat region (NRR) region. 3 stretches are compositionally biased toward low complexity: residues 752–791 (SMSDSVSTSGSTQQSQSVSTSKADSQSASTSTSGSIVVST), 806–1392 (SVSA…LSLS), and 1402–2214 (SNSA…ATSE). The interval 752-2232 (SMSDSVSTSG…AQSEKRLPDT (1481 aa)) is serine-rich repeat region 2, SRR2. The LPXTG sorting signal motif lies at 2229 to 2233 (LPDTG). Thr-2232 carries the pentaglycyl murein peptidoglycan amidated threonine modification. Positions 2233 to 2271 (GDSIKQNGLLGGVMTLLVGLGLMKRKKKKDENDQDDSQA) are cleaved as a propeptide — removed by sortase.

This sequence belongs to the serine-rich repeat protein (SRRP) family. In terms of processing, proteolytically cleaved by a metalloprotease. Post-translationally, glycosylated. It is probable that most of the Ser residues in SSR1 and SSR2 are O-GlcNAcylated. Sequential glycosylation by sugar transferases are able to generate complex sugar polymorphisms.

It is found in the secreted. It localises to the cell wall. Mediates binding to human platelets, possibly through a receptor-ligand interaction. Probably associated with virulence in endovascular infection. This Staphylococcus aureus (strain USA300) protein is Serine-rich adhesin for platelets (sraP).